Consider the following 93-residue polypeptide: Small ribosomal subunit protein uS19c (93 aa).

Belongs to the universal ribosomal protein uS19 family.

It localises to the plastid. It is found in the chloroplast. Its function is as follows. Protein S19 forms a complex with S13 that binds strongly to the 16S ribosomal RNA. The polypeptide is Small ribosomal subunit protein uS19c (Brachypodium distachyon (Purple false brome)).